The sequence spans 1106 residues: MPKREDLKSVLVIGSGPIVIGQAAEFDYSGTQALRVLKEEGLRVILVNSNPATIMTDPEFADATYVEPITPEVVEKIIAKERPDALLPTLGGQTALNTAIALDKNGVLAKYNVELIGANIAAIELGEDREKFKGVVERCGAESARSHIVHAMDEALVAAADLGYPLVVRPSFTMGGLGSGLAYNEKDLHRIAGAGLQYSPTSEVLLEESILGWKEYELEMMRDKNDNVVVVCSIENFDPVGVHTGDSITVAPAMTLTDREYQNLRDISIAVIREVGVDTGGCNIQFAIEPDTGRVVVIEMNPRVSRSSALASKATGFAIAKIATKLSLGYTLDEIPNDITQKTPASFEPTLDYVVVKVPRFAFEKFPAADPTLTTTMKSVGEAMAIGRNFTEALQKALRSLEQKGSQLDFGSVNALDVPELIEAAKRPTTDRLGQVQRALAGGASVEDLYAATGIDPWFLEQLQLLNEVAVELKQAPQLHESLLRKAKRHGFSDEQIAGLTNNAEAVVRGVRQALGIRPVYKTVDTCAAEFAAYTPYHYSSYDQEDEIALHEKPSVIILGSGPNRIGQGIEFDYSCVHASMALRKAGYETVMVNCNPETVSTDYDVSTRLYFEPLTLEDVLEVIAAEERTGGVMGVFVQLGGQTPLKLAQDLADAGVPILGTPPEAIDLAEHRGQFARVLDIAGLIAPKNGAAVSFEDAKRVADEIGYPVLVRPSYVLGGRGMEIVYDEPNLLRYITNATEITPDHPVLIDRFLEDAIEIDVDALYDGKELYLGGVMEHIEEAGIHSGDSACVLPPITLGQGVVDRVRDATQAIAEGVGVRGLINIQFALASDVLYVLEANPRASRTVPFVSKATGVQLAKAAALIGTGVTINQLRTAYKMIPSLPGTPGGFDGGSLPVGAPVAVKEAVLPFSRFRTPEGAVVDSLLGPEMRSTGEVMGIDKHFDTAFAKSQAAANNALPTEGKVFVSVANRDKRAVIMAVKLLADLGFEIVSTGGTADVLRRNGIQSSTVRKVAEGTSAEGEGTITDLIIAGEIDMVFNTPSGGEARGDGYEIRAAAISIGIPCITTVAEFNVAVLAIEAMRSFEWNVTSLQEHAEALLEAAANV.

The carboxyphosphate synthetic domain stretch occupies residues 1–402 (MPKREDLKSV…ALQKALRSLE (402 aa)). R129, R169, G175, G176, E208, I210, E215, G241, V242, H243, Q285, and E299 together coordinate ATP. Residues 133-328 (KGVVERCGAE…IAKIATKLSL (196 aa)) enclose the ATP-grasp 1 domain. Mg(2+) contacts are provided by Q285, E299, and N301. Mn(2+) contacts are provided by Q285, E299, and N301. The interval 403-546 (QKGSQLDFGS…YHYSSYDQED (144 aa)) is oligomerization domain. Residues 547-956 (EIALHEKPSV…AFAKSQAAAN (410 aa)) form a carbamoyl phosphate synthetic domain region. One can recognise an ATP-grasp 2 domain in the interval 677-868 (ARVLDIAGLI…LAKAAALIGT (192 aa)). Residues R713, R752, L754, E759, G784, I785, H786, S787, Q827, and E839 each coordinate ATP. Residues Q827, E839, and N841 each contribute to the Mg(2+) site. Positions 827, 839, and 841 each coordinate Mn(2+). Residues 957–1106 (NALPTEGKVF…EALLEAAANV (150 aa)) form the MGS-like domain. An allosteric domain region spans residues 957–1106 (NALPTEGKVF…EALLEAAANV (150 aa)).

The protein belongs to the CarB family. In terms of assembly, composed of two chains; the small (or glutamine) chain promotes the hydrolysis of glutamine to ammonia, which is used by the large (or ammonia) chain to synthesize carbamoyl phosphate. Tetramer of heterodimers (alpha,beta)4. Mg(2+) serves as cofactor. Requires Mn(2+) as cofactor.

The catalysed reaction is hydrogencarbonate + L-glutamine + 2 ATP + H2O = carbamoyl phosphate + L-glutamate + 2 ADP + phosphate + 2 H(+). The enzyme catalyses hydrogencarbonate + NH4(+) + 2 ATP = carbamoyl phosphate + 2 ADP + phosphate + 2 H(+). It functions in the pathway amino-acid biosynthesis; L-arginine biosynthesis; carbamoyl phosphate from bicarbonate: step 1/1. It participates in pyrimidine metabolism; UMP biosynthesis via de novo pathway; (S)-dihydroorotate from bicarbonate: step 1/3. In terms of biological role, large subunit of the glutamine-dependent carbamoyl phosphate synthetase (CPSase). CPSase catalyzes the formation of carbamoyl phosphate from the ammonia moiety of glutamine, carbonate, and phosphate donated by ATP, constituting the first step of 2 biosynthetic pathways, one leading to arginine and/or urea and the other to pyrimidine nucleotides. The large subunit (synthetase) binds the substrates ammonia (free or transferred from glutamine from the small subunit), hydrogencarbonate and ATP and carries out an ATP-coupled ligase reaction, activating hydrogencarbonate by forming carboxy phosphate which reacts with ammonia to form carbamoyl phosphate. The polypeptide is Carbamoyl phosphate synthase large chain (Renibacterium salmoninarum (strain ATCC 33209 / DSM 20767 / JCM 11484 / NBRC 15589 / NCIMB 2235)).